We begin with the raw amino-acid sequence, 317 residues long: Acetyl-coenzyme A carboxylase carboxyl transferase subunit alpha (317 aa).

The region spanning 40–294 (RLQKKSEELT…KQQILADLQD (255 aa)) is the CoA carboxyltransferase C-terminal domain.

This sequence belongs to the AccA family. Acetyl-CoA carboxylase is a heterohexamer composed of biotin carboxyl carrier protein (AccB), biotin carboxylase (AccC) and two subunits each of ACCase subunit alpha (AccA) and ACCase subunit beta (AccD).

The protein resides in the cytoplasm. The enzyme catalyses N(6)-carboxybiotinyl-L-lysyl-[protein] + acetyl-CoA = N(6)-biotinyl-L-lysyl-[protein] + malonyl-CoA. The protein operates within lipid metabolism; malonyl-CoA biosynthesis; malonyl-CoA from acetyl-CoA: step 1/1. In terms of biological role, component of the acetyl coenzyme A carboxylase (ACC) complex. First, biotin carboxylase catalyzes the carboxylation of biotin on its carrier protein (BCCP) and then the CO(2) group is transferred by the carboxyltransferase to acetyl-CoA to form malonyl-CoA. The protein is Acetyl-coenzyme A carboxylase carboxyl transferase subunit alpha of Actinobacillus pleuropneumoniae serotype 5b (strain L20).